Consider the following 580-residue polypeptide: Probable alpha-1,3-mannosyltransferase MNT4 (580 aa).

Residues 1–10 (MVLRIRRIKK) are Cytoplasmic-facing. A helical; Signal-anchor for type II membrane protein transmembrane segment spans residues 11-29 (LAPLIFTSLLSLIVLFRVY). The Lumenal portion of the chain corresponds to 30–580 (RQYPFSDHFE…KVVELWNKVV (551 aa)). N-linked (GlcNAc...) asparagine glycans are attached at residues Asn132, Asn167, Asn223, and Asn349.

The protein belongs to the MNN1/MNT family.

It localises to the membrane. This Saccharomyces cerevisiae (strain ATCC 204508 / S288c) (Baker's yeast) protein is Probable alpha-1,3-mannosyltransferase MNT4 (MNT4).